A 1197-amino-acid chain; its full sequence is Protein timeless homolog (1197 aa).

The tract at residues 1–309 (MDLYMMNCEL…GLHNLQNYSS (309 aa)) is required for homodimerization and for interaction with CRY1 and CHEK1. At Ser-281 the chain carries Phosphoserine. Disordered stretches follow at residues 647 to 674 (STPL…EELQ) and 943 to 1002 (RKKL…SAEN). A compositionally biased stretch (acidic residues) spans 656-673 (PEEGDAEEEEEEEEEEEL). Residues 810–949 (SHRAPLWSPE…KKRRKKLAPS (140 aa)) are DNA-binding domain. Residues 963–985 (QEDPEEEDEHLPEDESEDEESEE) are compositionally biased toward acidic residues. A compositionally biased stretch (low complexity) spans 986–999 (GLPSGQGQGSSSLS). Positions 997–1095 (SLSAENLGES…TQLRRVAASL (99 aa)) are interaction with PARP1. Residues Ser-1071 and Ser-1084 each carry the phosphoserine modification. Residues 1079–1197 (IPAKLSSTQL…KRFQIEDEDD (119 aa)) form a required for nuclear localization region. Thr-1086 bears the Phosphothreonine mark. The segment at 1088–1197 (LRRVAASLSQ…KRFQIEDEDD (110 aa)) is disordered. Composition is skewed to acidic residues over residues 1099-1109 (ENEEEREEEPE) and 1143-1153 (TEEEATGEEEW). Ser-1165 carries the phosphoserine modification.

This sequence belongs to the timeless family. As to quaternary structure, monomer. Homodimer or homomultimer. Component of the circadian core oscillator, which includes the CRY proteins, CLOCK or NPAS2, ARTNL/BMAL1 or ARTNL2/BMAL2, CSKN1D and/or CSNK1E, TIMELESS, and the PER proteins. Interacts directly with PER2; the interaction with PER2 is via its second PAS domain. Interacts directly with PER1 and PER3. Interacts with CRY1. Interacts with CRY2. Interacts with CHEK1, ATR and ATRIP. Interacts with CLSPN. Interacts (via N-terminus) with TIPIN. The TIMELESS-TIPIN heterodimer binds preferably to guanine-rich quadruplex-forming (G4) DNA structures. Associates with the MCM2-7 complex. Interacts with DNA polymerases alpha, delta and epsilon. Interacts with DDX11; this interaction increases recruitment of both proteins onto chromatin in response to replication stress induction by hydroxyurea. Interacts with PARP1; interaction is direct and independent of poly-ADP-ribose. In terms of tissue distribution, predominantly and robustly expressed in proliferative organs (spleen, thymus, intestine and testis) compared to those more differentiated such as kidney and liver (at protein level). Expressed in all tissues examined including brain, heart, lung, liver, skeletal muscle, kidney, placenta, pancreas, spleen, thymus and testis. Strongly expressed in the suprachiasmatic nucleus (SCN) and pars tuberalis, moderately in the cingulate cortex, pyrimidal cell layer of the piriform cortex, periventricular part of the caudate putamen, and granular layer of the cerebellum, and weakly in the cerebral cortex, gyrus dentatus, hippocampus and thalamic nuclei. In embryonic kidney, expression is highest in regions of active ureteric bud cell branching.

The protein localises to the nucleus. It localises to the chromosome. Its function is as follows. Plays an important role in the control of DNA replication, maintenance of replication fork stability, maintenance of genome stability throughout normal DNA replication, DNA repair and in the regulation of the circadian clock. Required to stabilize replication forks during DNA replication by forming a complex with TIPIN: this complex regulates DNA replication processes under both normal and stress conditions, stabilizes replication forks and influences both CHEK1 phosphorylation and the intra-S phase checkpoint in response to genotoxic stress. During DNA replication, inhibits the CMG complex ATPase activity and activates DNA polymerases catalytic activities, coupling DNA unwinding and DNA synthesis. TIMELESS promotes TIPIN nuclear localization. Plays a role in maintaining processive DNA replication past genomic guanine-rich DNA sequences that form G-quadruplex (G4) structures, possibly together with DDX1. Involved in cell survival after DNA damage or replication stress by promoting DNA repair. In response to double-strand breaks (DSBs), accumulates at DNA damage sites and promotes homologous recombination repair via its interaction with PARP1. May be specifically required for the ATR-CHEK1 pathway in the replication checkpoint induced by hydroxyurea or ultraviolet light. Involved in the determination of period length and in the DNA damage-dependent phase advancing of the circadian clock. Negatively regulates CLOCK|NPAS2-ARTNL/BMAL1|ARTNL2/BMAL2-induced transactivation of PER1 possibly via translocation of PER1 into the nucleus. May also play an important role in epithelial cell morphogenesis and formation of branching tubules. This Mus musculus (Mouse) protein is Protein timeless homolog.